Reading from the N-terminus, the 589-residue chain is Probable translation initiation factor IF-2 (589 aa).

Residues V4–R225 form the tr-type G domain. Residues G13–T20 are G1. G13–T20 contributes to the GTP binding site. The interval M38–H42 is G2. The segment at D79–G82 is G3. GTP is bound by residues D79 to H83 and N133 to D136. The interval N133–D136 is G4. Positions S201–V203 are G5.

Belongs to the TRAFAC class translation factor GTPase superfamily. Classic translation factor GTPase family. IF-2 subfamily.

In terms of biological role, function in general translation initiation by promoting the binding of the formylmethionine-tRNA to ribosomes. Seems to function along with eIF-2. This is Probable translation initiation factor IF-2 from Pyrobaculum aerophilum (strain ATCC 51768 / DSM 7523 / JCM 9630 / CIP 104966 / NBRC 100827 / IM2).